The following is a 992-amino-acid chain: MGMRSAARMPKLTRRSRILIMIALGVIVLLLAGPRLIDAYVDWLWFGELGYRSVFTTMLATRIVVCLVAGVVVGGIVFGGLALAYRTRPVFVPDADNDPVARYRAVVLARLRLVGIGIPAAIGLLAGIVAQSYWARIQLFLHGGDFGVRDPQFGRDLGFYAFELPFYRLMLSYMLVSVFLAFVANLVAHYIFGGIRLSGRTGALSRSARVQLVSLVGVLVLLKAVAYWLDRYELLSHTRGGKPFTGAGYTDINAVLPAKLILMAIALICAAAVFSAIALRDLRIPAIGLVLLLLSSLIVGAGWPLIVEQISVKPNAAQKESEYISRSITATRQAYGLTSDVVTYRNYSGDSPATAQQVAADRATTSNIRLLDPTIVSPAFTQFQQGKNFYYFPDQLSIDRYLDRNGNLRDYVVAARELNPDRLIDNQRDWINRHTVYTHGNGFIASPANTVRGIANDPNQNGGYPEFLVNVVGANGTVVSDGPAPLDQPRIYFGPVISNTSADYAIVGRNGDDREYDYETNIDTKRYTYTGSGGVPLGGWLARSVFAAKFAERNFLFSNVIGSNSKILFNRDPAQRVEAVAPWLTTDSAVYPAIVNKRLVWIVDGYTTLDNYPYSELTSLSSATADSNEVAFNRLVPDKKVSYIRNSVKATVDAYDGTVTLYQQDEKDPVLKAWMQVFPGTVKPKSDIAPELAEHLRYPEDLFKVQRMLLAKYHVNDPVTFFSTSDFWDVPLDPNPTASSYQPPYYIVAKNIAKDDNSASYQLISAMNRFKRDYLAAYISASSDPATYGNLTVLTIPGQVNGPKLANNAITTDPAVSQDLGVIGRDNQNRIRWGNLLTLPVAQGGLLYVEPVYASPGASDAASSYPRLIRVAMMYNDKVGYGPTVRDALTGLFGPGAGATATGIAPTEAAVPPSPAANPPPPASGPQPPPVTAAPPVPVGAVTLSPAKVAALQEIQAAIGAARDAQKKGDFAAYGSALQRLDEAITKFNDAG.

Transmembrane regions (helical) follow at residues Arg-17–Ala-39, Leu-59–Leu-81, Leu-113–Ala-135, Leu-169–Ile-191, Leu-212–Leu-229, Val-255–Ile-277, and Ile-284–Ile-306. The segment at Pro-906–Pro-938 is disordered. Pro residues predominate over residues Pro-912 to Pro-938.

Belongs to the UPF0182 family.

The protein resides in the cell membrane. The protein is UPF0182 protein Mb3215c of Mycobacterium bovis (strain ATCC BAA-935 / AF2122/97).